The primary structure comprises 328 residues: Olfactory receptor 13A1 (328 aa).

Residues 1 to 43 are Extracellular-facing; it reads MKLWMESHLIVPETRPSPRMMSNQTLVTEFILQGFSEHPEYRV. The N-linked (GlcNAc...) asparagine glycan is linked to N23. Residues 44-64 form a helical membrane-spanning segment; that stretch reads FLFSCFLFLYSGALTGNVLIT. Residues 65–72 lie on the Cytoplasmic side of the membrane; that stretch reads LAITFNPG. A helical membrane pass occupies residues 73 to 93; it reads LHAPMYFFLLNLATMDIICTS. Residues 94 to 117 are Extracellular-facing; it reads SIMPKALASLVSEESSISYGGCMA. C115 and C207 form a disulfide bridge. A helical membrane pass occupies residues 118–138; that stretch reads QLYFLTWAASSELLLLTVMAY. The Cytoplasmic portion of the chain corresponds to 139–157; sequence DRYAAICHPLHYSSMMSKV. Residues 158 to 178 form a helical membrane-spanning segment; that stretch reads FCSGLATAVWLLCAVNTAIHT. The Extracellular segment spans residues 179-215; it reads GLMLRLDFCGPNVIIHFFCEVPPLLLLSCSSTYVNGV. Residues 216–235 form a helical membrane-spanning segment; sequence MIVLADAFYGIVNFLMTIAS. Residues 236–255 are Cytoplasmic-facing; sequence YGFIVSSILKVKTAWGRQKA. Residues 256–276 traverse the membrane as a helical segment; the sequence is FSTCSSHLTVVCMYYTAVFYA. Residues 277-289 are Extracellular-facing; the sequence is YISPVSGYSAGKS. The chain crosses the membrane as a helical span at residues 290–310; the sequence is KLAGLLYTVLSPTLNPLIYTL. Residues 311-328 are Cytoplasmic-facing; the sequence is RNKEVKAALRKLFPFFRN.

The protein belongs to the G-protein coupled receptor 1 family.

The protein localises to the cell membrane. Odorant receptor. The polypeptide is Olfactory receptor 13A1 (OR13A1) (Homo sapiens (Human)).